The following is a 200-amino-acid chain: Thymidine kinase (200 aa).

ATP-binding positions include 15 to 22 and 88 to 91; these read GSMFSGKS and DEVQ. Residue Glu89 is the Proton acceptor of the active site. Zn(2+)-binding residues include Cys145, Cys148, Cys183, and His186.

This sequence belongs to the thymidine kinase family. Homotetramer.

Its subcellular location is the cytoplasm. It carries out the reaction thymidine + ATP = dTMP + ADP + H(+). This Bacillus pumilus (strain SAFR-032) protein is Thymidine kinase.